Here is a 366-residue protein sequence, read N- to C-terminus: Ribosomal RNA large subunit methyltransferase M (366 aa).

S-adenosyl-L-methionine is bound by residues Ser-188, 221–224 (CPGG), Asp-240, Asp-260, and Asp-277. The active-site Proton acceptor is Lys-306.

It belongs to the class I-like SAM-binding methyltransferase superfamily. RNA methyltransferase RlmE family. RlmM subfamily. In terms of assembly, monomer.

It localises to the cytoplasm. It catalyses the reaction cytidine(2498) in 23S rRNA + S-adenosyl-L-methionine = 2'-O-methylcytidine(2498) in 23S rRNA + S-adenosyl-L-homocysteine + H(+). In terms of biological role, catalyzes the 2'-O-methylation at nucleotide C2498 in 23S rRNA. In Citrobacter koseri (strain ATCC BAA-895 / CDC 4225-83 / SGSC4696), this protein is Ribosomal RNA large subunit methyltransferase M.